A 107-amino-acid chain; its full sequence is UPF0145 protein YbjQ (107 aa).

This sequence belongs to the UPF0145 family.

The protein is UPF0145 protein YbjQ of Salmonella dublin (strain CT_02021853).